Consider the following 355-residue polypeptide: uncharacterized protein (355 aa).

Disordered regions lie at residues 1 to 121, 226 to 253, and 336 to 355; these read MPID…MELR, RLMNSEEREAQDLKDAEASRRGKKKSSM, and NLHRLGGLHSDSPLSKRKRT. Positions 24–37 are enriched in acidic residues; it reads LESESSSESDYEEV. A compositionally biased stretch (polar residues) spans 65 to 87; the sequence is ETKTSSNFQNINPVQTIDNSASE. Low complexity predominate over residues 91–105; the sequence is DASSAEGGSNSAASS. The segment covering 106–117 has biased composition (acidic residues); it reads SEEEDSSDSEYE. A compositionally biased stretch (basic and acidic residues) spans 226-245; that stretch reads RLMNSEEREAQDLKDAEASR.

This is an uncharacterized protein from Schizosaccharomyces pombe (strain 972 / ATCC 24843) (Fission yeast).